A 329-amino-acid polypeptide reads, in one-letter code: BTB/POZ domain-containing adapter for CUL3-mediated RhoA degradation protein 1 (329 aa).

Over residues 1–22 (MSAEASGPAAAAAPSLEAPKPS) the composition is skewed to low complexity. The interval 1–31 (MSAEASGPAAAAAPSLEAPKPSGLEPGPAAY) is disordered. Positions 41 to 109 (KYVKLNVGGS…LRDGSVPLPE (69 aa)) constitute a BTB domain. The interval 282–303 (ATGGAAGAGGAGRGEDEENREH) is disordered.

Belongs to the BACURD family. As to quaternary structure, homotetramer; forms a two-fold symmetric tetramer in solution. Interacts with CUL3; interaction is direct and forms a 5:5 heterodecamer. Component of the BCR(KCTD13) E3 ubiquitin ligase complex, at least composed of CUL3, KCTD13/BACURD1 and RBX1. Interacts with RHOA; with a preference for RhoA-GDP. Interacts with POLD2 and PCNA. Interacts with SPRTN. As to expression, expressed in a wide variety of tissues.

It localises to the nucleus. It participates in protein modification; protein ubiquitination. In terms of biological role, substrate-specific adapter of a BCR (BTB-CUL3-RBX1) E3 ubiquitin-protein ligase complex required for synaptic transmission. The BCR(KCTD13) E3 ubiquitin ligase complex mediates the ubiquitination of RHOA, leading to its degradation by the proteasome Degradation of RHOA regulates the actin cytoskeleton and promotes synaptic transmission. This chain is BTB/POZ domain-containing adapter for CUL3-mediated RhoA degradation protein 1 (KCTD13), found in Homo sapiens (Human).